A 234-amino-acid chain; its full sequence is 2-C-methyl-D-erythritol 4-phosphate cytidylyltransferase (234 aa).

It belongs to the IspD/TarI cytidylyltransferase family. IspD subfamily.

It catalyses the reaction 2-C-methyl-D-erythritol 4-phosphate + CTP + H(+) = 4-CDP-2-C-methyl-D-erythritol + diphosphate. It participates in isoprenoid biosynthesis; isopentenyl diphosphate biosynthesis via DXP pathway; isopentenyl diphosphate from 1-deoxy-D-xylulose 5-phosphate: step 2/6. Its function is as follows. Catalyzes the formation of 4-diphosphocytidyl-2-C-methyl-D-erythritol from CTP and 2-C-methyl-D-erythritol 4-phosphate (MEP). This Photobacterium profundum (strain SS9) protein is 2-C-methyl-D-erythritol 4-phosphate cytidylyltransferase.